The chain runs to 538 residues: MAAKLVSLDMQARTALIKGLDTVADTVKITLGPKGRNVVLEKKFGAPVITNDGVTIAKEIDLEDPFENMGAQLVKEVASKTNDVAGDGTTTATVLAQALVHEGMKHVVAGANPMYVKRGIEKAVEKVVEELKKIAKPVETKQDIAHVAAISANNDEEIGNLIAEAMDKVGKDGVITVEESQGITTTLELVEGMQFDRGYLSAYMITDPERMEAVLEEPYILITDKKISAVSEILPILERVVQTGKPLVIIAEDVEGEALATLVVNKLRGVLQSLAVKAPGFGDRRKAMLQDIAILTGGQFISEETGIKLENVTLDMLGRAEKVRANKDKTTIIGGKGNKKDIEARIAQIKKQLEETDSEFDREKLQERLAKLAGGVAVIKVGAATEVELKEKKHRIEDALSATKAAVEEGIVPGGGVALIRTIKALDDIKVDNEDERIGVEIVRRSLDVPLKLIANNAGKEGSIIAEKVKEMDGPMGYDAARDRFVNMFDAGIVDPCKVTRSALQNAASIAALVLTTEGLVAEKPEKEKQTPPPPPEY.

Residues 30–33 (TLGP), 87–91 (DGTTT), Gly415, 479–481 (DAA), and Asp495 contribute to the ATP site.

It belongs to the chaperonin (HSP60) family. In terms of assembly, forms a cylinder of 14 subunits composed of two heptameric rings stacked back-to-back. Interacts with the co-chaperonin GroES.

It is found in the cytoplasm. The enzyme catalyses ATP + H2O + a folded polypeptide = ADP + phosphate + an unfolded polypeptide.. In terms of biological role, together with its co-chaperonin GroES, plays an essential role in assisting protein folding. The GroEL-GroES system forms a nano-cage that allows encapsulation of the non-native substrate proteins and provides a physical environment optimized to promote and accelerate protein folding. The protein is Chaperonin GroEL of Dictyoglomus turgidum (strain DSM 6724 / Z-1310).